The following is a 1160-amino-acid chain: Protein GIGANTEA (1160 aa).

Residues 158 to 169 show a composition bias toward polar residues; that stretch reads CSSTSDQASSCE. Disordered regions lie at residues 158–188, 600–629, and 800–830; these read CSST…RKPL, GGSK…RNRC, and PVKK…SRSH. Over residues 170–187 the composition is skewed to basic and acidic residues; the sequence is SMEKRANGSPRNEPDRKP. The span at 801–812 shows a compositional bias: basic and acidic residues; the sequence is VKKDEPPIEEKN.

The protein belongs to the GIGANTEA family.

Its subcellular location is the nucleus. Involved in regulation of circadian rhythm, and in the control of the photoperiodic flowering. Acts as a suppressor of flowering under short-day (SD) and long-day (LD) conditions. Activates Hd1/CONSTANS gene. The polypeptide is Protein GIGANTEA (GI) (Oryza sativa subsp. japonica (Rice)).